A 184-amino-acid chain; its full sequence is Peptide deformylase 2 (184 aa).

Fe cation is bound by residues C110 and H153. Residue E154 is part of the active site. Position 157 (H157) interacts with Fe cation.

The protein belongs to the polypeptide deformylase family. Fe(2+) is required as a cofactor.

It catalyses the reaction N-terminal N-formyl-L-methionyl-[peptide] + H2O = N-terminal L-methionyl-[peptide] + formate. Removes the formyl group from the N-terminal Met of newly synthesized proteins. Requires at least a dipeptide for an efficient rate of reaction. N-terminal L-methionine is a prerequisite for activity but the enzyme has broad specificity at other positions. This is Peptide deformylase 2 from Bacillus anthracis.